We begin with the raw amino-acid sequence, 581 residues long: Amino-acid acetyltransferase, mitochondrial (581 aa).

Residues 401-558 (FTLHNLIEDE…RIVGSEAVNI (158 aa)) form the N-acetyltransferase domain.

This sequence belongs to the acetyltransferase family.

The protein localises to the mitochondrion. The catalysed reaction is L-glutamate + acetyl-CoA = N-acetyl-L-glutamate + CoA + H(+). It functions in the pathway amino-acid biosynthesis; L-arginine biosynthesis; N(2)-acetyl-L-ornithine from L-glutamate: step 1/4. N-acetylglutamate synthase involved in arginine biosynthesis. The polypeptide is Amino-acid acetyltransferase, mitochondrial (ARG2) (Scheffersomyces stipitis (strain ATCC 58785 / CBS 6054 / NBRC 10063 / NRRL Y-11545) (Yeast)).